The chain runs to 251 residues: 2,3-bisphosphoglycerate-dependent phosphoglycerate mutase (251 aa).

Residues 7–14, 20–21, arginine 59, 86–89, lysine 97, 113–114, and 186–187 each bind substrate; these read RHGESEWN, TG, ERHY, RR, and GN. The active-site Tele-phosphohistidine intermediate is the histidine 8. Glutamate 86 serves as the catalytic Proton donor/acceptor.

It belongs to the phosphoglycerate mutase family. BPG-dependent PGAM subfamily.

The catalysed reaction is (2R)-2-phosphoglycerate = (2R)-3-phosphoglycerate. Its pathway is carbohydrate degradation; glycolysis; pyruvate from D-glyceraldehyde 3-phosphate: step 3/5. Its function is as follows. Catalyzes the interconversion of 2-phosphoglycerate and 3-phosphoglycerate. This is 2,3-bisphosphoglycerate-dependent phosphoglycerate mutase from Treponema pallidum (strain Nichols).